An 84-amino-acid polypeptide reads, in one-letter code: Small ribosomal subunit protein bS16 (84 aa).

Belongs to the bacterial ribosomal protein bS16 family.

This Delftia acidovorans (strain DSM 14801 / SPH-1) protein is Small ribosomal subunit protein bS16.